Reading from the N-terminus, the 233-residue chain is Achaete-scute homolog 1 (233 aa).

Disordered regions lie at residues 1–24 (MESS…FLPP) and 39–95 (AAAA…ELMR). The segment covering 39-62 (AAAAAAQSAQQQQQQQAPQQQAPQ) has biased composition (low complexity). Residues 78-87 (SAAKQVKRQR) are compositionally biased toward basic residues. Positions 115–167 (AAVARRNERERNRVKLVNLGFATLREHVPNGAANKKMSKVETLRSAVEYIRAL) constitute a bHLH domain. Lys-153 carries the post-translational modification N6-acetyllysine.

In terms of assembly, efficient DNA binding requires dimerization with another bHLH protein. Forms a heterodimer with TCF3. In terms of tissue distribution, developing CNS and PNS at embryonic and postnatal stages.

The protein resides in the nucleus. Functionally, transcription factor that plays a key role in neuronal differentiation: acts as a pioneer transcription factor, accessing closed chromatin to allow other factors to bind and activate neural pathways. Directly binds the E box motif (5'-CANNTG-3') on promoters and promotes transcription of neuronal genes. The combination of three transcription factors, ASCL1, POU3F2/BRN2 and MYT1L, is sufficient to reprogram fibroblasts and other somatic cells into induced neuronal (iN) cells in vitro. Plays a role at early stages of development of specific neural lineages in most regions of the CNS, and of several lineages in the PNS. Essential for the generation of olfactory and autonomic neurons. Acts synergistically with FOXN4 to specify the identity of V2b neurons rather than V2a from bipotential p2 progenitors during spinal cord neurogenesis, probably through DLL4-NOTCH signaling activation. Involved in the regulation of neuroendocrine cell development in the glandular stomach. This Rattus norvegicus (Rat) protein is Achaete-scute homolog 1 (Ascl1).